We begin with the raw amino-acid sequence, 264 residues long: MSPTAGENILLKAEALSVYYGNSLAVKDVYLEVLKNKIVAFIGPSGCGKSTILRCFNRMNDLINGCRVQGRITFHDQEINDGRVDAVELRSRIGMVFQKPNPFPKSIYENIAYGARINGYQGDMDELVEKSLRQAALWDEVKDKLKDSGLALSGGQQQRLCIARTVAVQPEVILMDEPCSALDPISTLAIEELMQTLKEQYTIIIVTHNMQQASRTSDYTAFFNARATEGGGKMGYLVEFDTTEKIFDSPDQEATADYVSGRFG.

The region spanning 11–250 (LKAEALSVYY…DTTEKIFDSP (240 aa)) is the ABC transporter domain. ATP is bound at residue 43 to 50 (GPSGCGKS).

Belongs to the ABC transporter superfamily. Phosphate importer (TC 3.A.1.7) family. In terms of assembly, the complex is composed of two ATP-binding proteins (PstB), two transmembrane proteins (PstC and PstA) and a solute-binding protein (PstS).

It localises to the cell inner membrane. It carries out the reaction phosphate(out) + ATP + H2O = ADP + 2 phosphate(in) + H(+). Its function is as follows. Part of the ABC transporter complex PstSACB involved in phosphate import. Responsible for energy coupling to the transport system. This is Phosphate import ATP-binding protein PstB from Synechococcus sp. (strain ATCC 27144 / PCC 6301 / SAUG 1402/1) (Anacystis nidulans).